A 498-amino-acid polypeptide reads, in one-letter code: MQINPTTSGTAVSQLEEKNLGRVAQIIGPVLDVVFPPGKMPNIYNALVVKGQDADGQEIKVTCEVQQLLGNNRVRAVAMSATDGLTRGMDVIDTGAPLSVPVGGATLGRIFNVLGEPVDNLGPVDTRTTSPIHRSAPAFIQLDTKLAIFETGIKVVDLLAPYRRGGKIGLFGGAGVGKTVLIMELINNIAKAHGGVSVFGGVGERTREGNDLYMEMKESGVINEKNITESKVALVYGQMNEPPGARMRVGLTALTMAEYFRDVNEQDVLLFIDNIFRFVQAGSEVSALLGRMPSAVGYQPTLSTEMGSLQERITSTKEGSITSIQAVYVPADDLTDPAPATTFAHLDATTVLSRGLAAKGIYPAVDPLDSTSTMLQPGIVGEDHYETAQRVKETLQRYKELQDIIAILGLDELSEEDRLTVARARKIERFLSQPFFVAEVFTGSPGKYVGLEETIRGFKLILSGELDSLPEQAFYLVGNIDEATAKAINLEVESKLKK.

Position 172–179 (172–179 (GGAGVGKT)) interacts with ATP.

The protein belongs to the ATPase alpha/beta chains family. F-type ATPases have 2 components, CF(1) - the catalytic core - and CF(0) - the membrane proton channel. CF(1) has five subunits: alpha(3), beta(3), gamma(1), delta(1), epsilon(1). CF(0) has four main subunits: a(1), b(1), b'(1) and c(9-12).

The protein localises to the plastid. It is found in the chloroplast thylakoid membrane. The catalysed reaction is ATP + H2O + 4 H(+)(in) = ADP + phosphate + 5 H(+)(out). Functionally, produces ATP from ADP in the presence of a proton gradient across the membrane. The catalytic sites are hosted primarily by the beta subunits. This is ATP synthase subunit beta, chloroplastic from Lemna minor (Common duckweed).